A 177-amino-acid chain; its full sequence is Coatomer subunit zeta-1 (177 aa).

Met-1 carries the N-acetylmethionine modification.

The protein belongs to the adaptor complexes small subunit family. As to quaternary structure, oligomeric complex that consists of at least the alpha, beta, beta', gamma, delta, epsilon and zeta subunits.

It is found in the cytoplasm. Its subcellular location is the golgi apparatus membrane. The protein localises to the cytoplasmic vesicle. It localises to the COPI-coated vesicle membrane. Functionally, the coatomer is a cytosolic protein complex that binds to dilysine motifs and reversibly associates with Golgi non-clathrin-coated vesicles, which further mediate biosynthetic protein transport from the ER, via the Golgi up to the trans Golgi network. Coatomer complex is required for budding from Golgi membranes, and is essential for the retrograde Golgi-to-ER transport of dilysine-tagged proteins. The zeta subunit may be involved in regulating the coat assembly and, hence, the rate of biosynthetic protein transport due to its association-dissociation properties with the coatomer complex. In Bos taurus (Bovine), this protein is Coatomer subunit zeta-1 (COPZ1).